The sequence spans 352 residues: Desmethylxanthohumol 6'-O-methyltransferase (352 aa).

An S-adenosyl-L-methionine-binding site is contributed by D219. Catalysis depends on H257, which acts as the Proton acceptor.

It belongs to the class I-like SAM-binding methyltransferase superfamily. Cation-independent O-methyltransferase family. In terms of assembly, homodimer. In terms of tissue distribution, highly expressed in lupulin glands. Detected in early-, mid- and late-stage cones.

Its subcellular location is the cytoplasm. The enzyme catalyses desmethylxanthohumol + S-adenosyl-L-methionine = xanthohumol + S-adenosyl-L-homocysteine + H(+). The catalysed reaction is xanthogalenol + S-adenosyl-L-methionine = 4'-O-methylxanthohumol + S-adenosyl-L-homocysteine + H(+). The protein operates within secondary metabolite biosynthesis. With respect to regulation, inhibited by S-adenosyl homocysteine. In terms of biological role, involved in the biosynthesis of prenylated phenolics natural products which contribute to the bitter taste of beer and display broad biological activities. Catalyzes the biosynthesis of xanthohumol. Methylates desmethylxanthohumol and xanthogalenol, but not caffeic acid, prenylflavanones, simple phenols or phenylpropanoids. The polypeptide is Desmethylxanthohumol 6'-O-methyltransferase (Humulus lupulus (European hop)).